The following is a 351-amino-acid chain: Photosystem II D2 protein (351 aa).

A helical transmembrane segment spans residues 39-59 (CAYLAVGGWLTGTTFVTSWYT). Histidine 116 contributes to the chlorophyll a binding site. Residues 123 to 139 (GFCLRQFEIARLVGLRP) traverse the membrane as a helical segment. 2 residues coordinate pheophytin a: glutamine 128 and asparagine 141. A helical membrane pass occupies residues 151-164 (VFVSVFLMYPLGQA). Histidine 196 contacts chlorophyll a. The chain crosses the membrane as a helical span at residues 206–226 (GALLCAIHGATVQNTLFEDGD). Histidine 213 and phenylalanine 260 together coordinate a plastoquinone. Histidine 213 is a Fe cation binding site. Histidine 267 contributes to the Fe cation binding site. Residues 277–293 (GLWTSAFGIVGLALNLR) form a helical membrane-spanning segment.

The protein belongs to the reaction center PufL/M/PsbA/D family. As to quaternary structure, PSII is composed of 1 copy each of membrane proteins PsbA, PsbB, PsbC, PsbD, PsbE, PsbF, PsbH, PsbI, PsbJ, PsbK, PsbL, PsbM, PsbT, PsbX, PsbY, PsbZ, Psb30/Ycf12, at least 3 peripheral proteins of the oxygen-evolving complex and a large number of cofactors. It forms dimeric complexes. The cofactor is The D1/D2 heterodimer binds P680, chlorophylls that are the primary electron donor of PSII, and subsequent electron acceptors. It shares a non-heme iron and each subunit binds pheophytin, quinone, additional chlorophylls, carotenoids and lipids. There is also a Cl(-1) ion associated with D1 and D2, which is required for oxygen evolution. The PSII complex binds additional chlorophylls, carotenoids and specific lipids..

The protein resides in the plastid. It localises to the chloroplast thylakoid membrane. It catalyses the reaction 2 a plastoquinone + 4 hnu + 2 H2O = 2 a plastoquinol + O2. In terms of biological role, photosystem II (PSII) is a light-driven water:plastoquinone oxidoreductase that uses light energy to abstract electrons from H(2)O, generating O(2) and a proton gradient subsequently used for ATP formation. It consists of a core antenna complex that captures photons, and an electron transfer chain that converts photonic excitation into a charge separation. The D1/D2 (PsbA/PsbD) reaction center heterodimer binds P680, the primary electron donor of PSII as well as several subsequent electron acceptors. D2 is needed for assembly of a stable PSII complex. The sequence is that of Photosystem II D2 protein from Pyropia yezoensis (Susabi-nori).